The chain runs to 244 residues: Extracellular superoxide dismutase [Cu-Zn] (244 aa).

The first 18 residues, 1–18 (MLALVCSCLLLAALPADT), serve as a signal peptide directing secretion. Disulfide bonds link Cys-67–Cys-212 and Cys-129–Cys-211. An N-linked (GlcNAc...) asparagine glycan is attached at Asn-111. 3 residues coordinate Cu cation: His-118, His-120, and His-135. Zn(2+) contacts are provided by His-135, His-143, His-146, and Asp-149. Residue His-185 participates in Cu cation binding. A disordered region spans residues 221–244 (PWARQAQEHAERKKRRRESECKAA). Residues 226–244 (AQEHAERKKRRRESECKAA) show a composition bias toward basic and acidic residues.

The protein belongs to the Cu-Zn superoxide dismutase family. Homotetramer. Directly interacts with ATP7A; this interaction is copper-dependent and is required for SOD3 activity. Cu cation serves as cofactor. It depends on Zn(2+) as a cofactor.

It localises to the secreted. The protein resides in the extracellular space. Its subcellular location is the golgi apparatus. It is found in the trans-Golgi network. The enzyme catalyses 2 superoxide + 2 H(+) = H2O2 + O2. In terms of biological role, protect the extracellular space from toxic effect of reactive oxygen intermediates by converting superoxide radicals into hydrogen peroxide and oxygen. In Oryctolagus cuniculus (Rabbit), this protein is Extracellular superoxide dismutase [Cu-Zn] (SOD3).